A 562-amino-acid chain; its full sequence is Protein FAM222B (562 aa).

Composition is skewed to low complexity over residues 147-167 and 183-201; these read PQAQALARQQALQHAQTLAHA and ALSHPQSLQQPQGLGHPQQ. Disordered regions lie at residues 147-242 and 537-562; these read PQAQ…PPNV and AHRAPGTRAPDPTDSRSLHIQHPGYR.

It belongs to the FAM222 family.

This Mus musculus (Mouse) protein is Protein FAM222B (Fam222b).